Reading from the N-terminus, the 369-residue chain is Anhydro-N-acetylmuramic acid kinase (369 aa).

Residue 12-19 (GTSLDGVD) participates in ATP binding.

It belongs to the anhydro-N-acetylmuramic acid kinase family.

The enzyme catalyses 1,6-anhydro-N-acetyl-beta-muramate + ATP + H2O = N-acetyl-D-muramate 6-phosphate + ADP + H(+). It functions in the pathway amino-sugar metabolism; 1,6-anhydro-N-acetylmuramate degradation. It participates in cell wall biogenesis; peptidoglycan recycling. In terms of biological role, catalyzes the specific phosphorylation of 1,6-anhydro-N-acetylmuramic acid (anhMurNAc) with the simultaneous cleavage of the 1,6-anhydro ring, generating MurNAc-6-P. Is required for the utilization of anhMurNAc either imported from the medium or derived from its own cell wall murein, and thus plays a role in cell wall recycling. This chain is Anhydro-N-acetylmuramic acid kinase, found in Escherichia coli O81 (strain ED1a).